Here is a 375-residue protein sequence, read N- to C-terminus: Chaperone protein DnaJ (375 aa).

The J domain maps to 5–69; the sequence is DYYEILGVSK…QKRAAYDQYG (65 aa). Residues 130–208 form a CR-type zinc finger; sequence GVTKEIRIPT…CHGHGRVEKA (79 aa). Zn(2+) contacts are provided by C143, C146, C160, C163, C182, C185, C196, and C199. 4 CXXCXGXG motif repeats span residues 143 to 150, 160 to 167, 182 to 189, and 196 to 203; these read CGVCHGSG, CPTCHGQG, CPHCHGRG, and CNSCHGHG.

This sequence belongs to the DnaJ family. In terms of assembly, homodimer. Zn(2+) is required as a cofactor.

The protein resides in the cytoplasm. Functionally, participates actively in the response to hyperosmotic and heat shock by preventing the aggregation of stress-denatured proteins and by disaggregating proteins, also in an autonomous, DnaK-independent fashion. Unfolded proteins bind initially to DnaJ; upon interaction with the DnaJ-bound protein, DnaK hydrolyzes its bound ATP, resulting in the formation of a stable complex. GrpE releases ADP from DnaK; ATP binding to DnaK triggers the release of the substrate protein, thus completing the reaction cycle. Several rounds of ATP-dependent interactions between DnaJ, DnaK and GrpE are required for fully efficient folding. Also involved, together with DnaK and GrpE, in the DNA replication of plasmids through activation of initiation proteins. The sequence is that of Chaperone protein DnaJ from Serratia proteamaculans (strain 568).